A 710-amino-acid chain; its full sequence is MSMRIPKAASVNDEQHQRIIKYGRALVLDIVEQYGGGHPGSAMGAMAIGIALWKYTLKYAPNDPNYFNRDRFVLSNGHVCLFQYIFQHLYGLKSMTMAQLKSYHSNDFHSLCPGHPEIEHDAVEVTTGPLGQGISNSVGLAIATKNLAATYNKPGFDIITNKVYCMVGDACLQEGPALESISLAGHMGLDNLIVLYDNNQVCCDGSVDIANTEDISAKFKACNWNVIEVENASEDVATIVKALEYAQAEKHRPTLINCRTVIGSGAAFENHCAAHGNALGEDGVRELKIKYGMNPAQKFYIPQDVYDFFKEKPAEGDKLVAEWKSLVAKYVKAYPEEGQEFLARMRGELPKNWKSFLPQQEFTGDAPTRAAARELVRALGQNCKSVIAGCADLSVSVNLQWPGVKYFMDPSLSTQCGLSGDYSGRYIEYGIREHAMCAIANGLAAYNKGTFLPITSTFFMFYLYAAPAIRMAGLQELKAIHIGTHDSINEGENGPTHQPVESPALFRAMPNIYYMRPVDSAEVFGLFQKAVELPFSSILSLSRNEVLQYPGKSSAEKAQRGGYILEDAENAEVQIIGVGAEMEFAYKAAKILGRKFRTRVLSIPCTRLFDEQSIGYRRSVLRKDGRQVPTVVVDGHVAFGWERYATASYCMNTYGKSLPPEVIYEYFGYNPATIAKKVEAYVRACQRDPLLLHDFLDLKEKPNHDKVNKL.

Thiamine diphosphate is bound by residues His78 and 128–130 (GPL). Mg(2+) is bound by residues Asp169, Asn199, and Val201. Asn199 serves as a coordination point for thiamine diphosphate. Residues His275, Glu433, and Phe461 each contribute to the thiamine diphosphate site. Glu433 serves as the catalytic Proton donor. The Microbody targeting signal signature appears at 708–710 (NKL).

The protein belongs to the transketolase family. Mg(2+) is required as a cofactor. The cofactor is Ca(2+). Mn(2+) serves as cofactor. Requires Co(2+) as cofactor. It depends on thiamine diphosphate as a cofactor.

It is found in the peroxisome. It catalyses the reaction D-xylulose 5-phosphate + formaldehyde = dihydroxyacetone + D-glyceraldehyde 3-phosphate. Its function is as follows. This is the major methanol assimilatory enzyme from the methylotrophic Hansenula polymorpha. The polypeptide is Dihydroxyacetone synthase (DAS) (Pichia angusta (Yeast)).